A 462-amino-acid polypeptide reads, in one-letter code: Lysyl endopeptidase (462 aa).

An N-terminal signal peptide occupies residues 1-24 (MHKRTYLNACLVLALAAGASQALA). Residues 25 to 211 (APGASEMAGD…VSYFADSLYK (187 aa)) constitute a propeptide that is removed on maturation. Disulfide bonds link Cys-224–Cys-435, Cys-230–Cys-305, and Cys-262–Cys-284. Active-site charge relay system residues include His-283, Asp-333, and Ser-409.

The protein belongs to the peptidase S1 family. Post-translationally, experiments performed in E.coli. Processing of pro-endopeptidase to mature endopeptidase is probably autocatalytic, as mutations in the probable active site residues prevent processing, and purified inactive pro-endopeptidase disappears in the presence of active endopeptidase.

It is found in the secreted. It carries out the reaction Preferential cleavage: Lys-|-Xaa, including Lys-|-Pro.. Lysine-specific endoprotease. Involved in corneal virulence. The protein is Lysyl endopeptidase (prpL) of Pseudomonas aeruginosa (strain ATCC 15692 / DSM 22644 / CIP 104116 / JCM 14847 / LMG 12228 / 1C / PRS 101 / PAO1).